Reading from the N-terminus, the 144-residue chain is Small ribosomal subunit protein bS6 (144 aa).

The segment at 97–144 is disordered; it reads DTEQSLIMKSKDEKGDKPERSERRRRDDEEVDAAPAATDTDGDNAEAA. The span at 105–124 shows a compositional bias: basic and acidic residues; the sequence is KSKDEKGDKPERSERRRRDD.

It belongs to the bacterial ribosomal protein bS6 family.

In terms of biological role, binds together with bS18 to 16S ribosomal RNA. This chain is Small ribosomal subunit protein bS6, found in Xanthomonas campestris pv. campestris (strain B100).